A 1101-amino-acid chain; its full sequence is Zinc finger SWIM domain-containing protein 4 (1101 aa).

Positions 1–29 (MEPPAAKRSRGCPAGDEPGTGARRSRPEP) are disordered. The SWIM-type zinc finger occupies 134-171 (YHVSISFDRCKITSVSCGCDNRDLFYCAHVVALSLYRI).

The chain is Zinc finger SWIM domain-containing protein 4 (Zswim4) from Mus musculus (Mouse).